Here is a 171-residue protein sequence, read N- to C-terminus: Adenine phosphoribosyltransferase (171 aa).

This sequence belongs to the purine/pyrimidine phosphoribosyltransferase family. As to quaternary structure, homodimer.

It is found in the cytoplasm. It catalyses the reaction AMP + diphosphate = 5-phospho-alpha-D-ribose 1-diphosphate + adenine. Its pathway is purine metabolism; AMP biosynthesis via salvage pathway; AMP from adenine: step 1/1. Functionally, catalyzes a salvage reaction resulting in the formation of AMP, that is energically less costly than de novo synthesis. The polypeptide is Adenine phosphoribosyltransferase (Shouchella clausii (strain KSM-K16) (Alkalihalobacillus clausii)).